The primary structure comprises 582 residues: 2-succinyl-5-enolpyruvyl-6-hydroxy-3-cyclohexene-1-carboxylate synthase (582 aa).

It belongs to the TPP enzyme family. MenD subfamily. As to quaternary structure, homodimer. It depends on Mg(2+) as a cofactor. The cofactor is Mn(2+). Thiamine diphosphate is required as a cofactor.

It catalyses the reaction isochorismate + 2-oxoglutarate + H(+) = 5-enolpyruvoyl-6-hydroxy-2-succinyl-cyclohex-3-ene-1-carboxylate + CO2. It participates in quinol/quinone metabolism; 1,4-dihydroxy-2-naphthoate biosynthesis; 1,4-dihydroxy-2-naphthoate from chorismate: step 2/7. It functions in the pathway cofactor biosynthesis; phylloquinone biosynthesis. Catalyzes the thiamine diphosphate-dependent decarboxylation of 2-oxoglutarate and the subsequent addition of the resulting succinic semialdehyde-thiamine pyrophosphate anion to isochorismate to yield 2-succinyl-5-enolpyruvyl-6-hydroxy-3-cyclohexene-1-carboxylate (SEPHCHC). The chain is 2-succinyl-5-enolpyruvyl-6-hydroxy-3-cyclohexene-1-carboxylate synthase from Synechococcus elongatus (strain ATCC 33912 / PCC 7942 / FACHB-805) (Anacystis nidulans R2).